The chain runs to 712 residues: NADH-quinone oxidoreductase subunit L (712 aa).

17 helical membrane-spanning segments follow: residues 4 to 24 (IILLAPLLGALIGGFGWRLIT), 28 to 48 (ALVVTTGLLFLSCILSWVVFL), 79 to 99 (LTAIMLIVVTTVSALVHLYSW), 113 to 133 (AYKARFFAYLSFFTFAMLMLV), 138 to 158 (LVQMFFGWEGVGVASYLLIGF), 183 to 203 (FALGIMGLFFLTDSIDMDVIF), 216 to 236 (FLAWEFNAANLLAVLLFIGAM), 256 to 276 (TPVSALIHAATMVTAGVFLVC), 290 to 310 (MMVVYVGAVTAFFAATVGLVQ), 325 to 345 (LGYMFVAAGSGVYSVAMFHLL), 346 to 366 (THAFFKAMLFLGAGSVIHAMH), 385 to 405 (FAIMMIGTLAITGVGIPFFSI), 421 to 441 (IIESAFASGNGFAFYVLVAAA), 475 to 495 (AVMLAPLALLAVGSVLAGMVW), 588 to 608 (LSPFGAMVTGFFFAWLYYIGD), 655 to 675 (GDGAVIDGAINGLALGWIPFF), and 686 to 706 (YLFHYAFAMVLGIVALMFWVV).

Belongs to the complex I subunit 5 family. As to quaternary structure, NDH-1 is composed of 14 different subunits. Subunits NuoA, H, J, K, L, M, N constitute the membrane sector of the complex.

Its subcellular location is the cellular chromatophore membrane. It carries out the reaction a quinone + NADH + 5 H(+)(in) = a quinol + NAD(+) + 4 H(+)(out). Its function is as follows. NDH-1 shuttles electrons from NADH, via FMN and iron-sulfur (Fe-S) centers, to quinones in the respiratory chain. The immediate electron acceptor for the enzyme in this species is believed to be ubiquinone. Couples the redox reaction to proton translocation (for every two electrons transferred, four hydrogen ions are translocated across the cytoplasmic membrane), and thus conserves the redox energy in a proton gradient. This chain is NADH-quinone oxidoreductase subunit L (nuoL), found in Rhodobacter capsulatus (Rhodopseudomonas capsulata).